The primary structure comprises 192 residues: Signal peptidase complex catalytic subunit SEC11C (192 aa).

Residues 1-28 (MVRAGAVGTHLPTSSLDIFGDLRKMNKR) are Cytoplasmic-facing. Residues 29–48 (QLYYQVLNFAMIVSSALMIW) form a helical; Signal-anchor for type II membrane protein membrane-spanning segment. Over 49 to 192 (KGLIVLTGSE…GAYVLLKRES (144 aa)) the chain is Lumenal. Residues Ser-68, His-108, and Asp-134 each act as charge relay system in the active site. Positions 177–188 (ALVAVMGAYVLL) are C-terminal short (CTS) helix.

Belongs to the peptidase S26B family. In terms of assembly, component of the signal peptidase complex paralog C (SPC-C) composed of a catalytic subunit SEC11C and three accessory subunits SPCS1, SPCS2 and SPCS3. Within the complex, interacts with SPCS2 and SPCS3. The complex induces a local thinning of the ER membrane which is used to measure the length of the signal peptide (SP) h-region of protein substrates. This ensures the selectivity of the complex towards h-regions shorter than 18-20 amino acids. In terms of processing, may undergo processing at the N-terminus.

The protein resides in the endoplasmic reticulum membrane. The catalysed reaction is Cleavage of hydrophobic, N-terminal signal or leader sequences from secreted and periplasmic proteins.. Catalytic component of the signal peptidase complex (SPC) which catalyzes the cleavage of N-terminal signal sequences from nascent proteins as they are translocated into the lumen of the endoplasmic reticulum. Specifically cleaves N-terminal signal peptides that contain a hydrophobic alpha-helix (h-region) shorter than 18-20 amino acids. The polypeptide is Signal peptidase complex catalytic subunit SEC11C (Sec11c) (Rattus norvegicus (Rat)).